Reading from the N-terminus, the 176-residue chain is Ribosome maturation factor RimM (176 aa).

The 74-residue stretch at 93-166 (EGEYYHADLI…RVVIEMPGEI (74 aa)) folds into the PRC barrel domain.

It belongs to the RimM family. Binds ribosomal protein uS19.

The protein resides in the cytoplasm. An accessory protein needed during the final step in the assembly of 30S ribosomal subunit, possibly for assembly of the head region. Essential for efficient processing of 16S rRNA. May be needed both before and after RbfA during the maturation of 16S rRNA. It has affinity for free ribosomal 30S subunits but not for 70S ribosomes. In Rhodopseudomonas palustris (strain BisA53), this protein is Ribosome maturation factor RimM.